Consider the following 294-residue polypeptide: Cytidine deaminase (294 aa).

CMP/dCMP-type deaminase domains are found at residues 48–168 (DEDA…FGPK) and 186–294 (VSGD…VLLG). A substrate-binding site is contributed by 89-91 (NME). Histidine 102 provides a ligand contact to Zn(2+). Glutamate 104 functions as the Proton donor in the catalytic mechanism. Cysteine 129 and cysteine 132 together coordinate Zn(2+).

It belongs to the cytidine and deoxycytidylate deaminase family. In terms of assembly, homodimer. The cofactor is Zn(2+).

The catalysed reaction is cytidine + H2O + H(+) = uridine + NH4(+). It catalyses the reaction 2'-deoxycytidine + H2O + H(+) = 2'-deoxyuridine + NH4(+). In terms of biological role, this enzyme scavenges exogenous and endogenous cytidine and 2'-deoxycytidine for UMP synthesis. The polypeptide is Cytidine deaminase (Klebsiella pneumoniae subsp. pneumoniae (strain ATCC 700721 / MGH 78578)).